The chain runs to 268 residues: 3-deoxy-manno-octulosonate cytidylyltransferase (268 aa).

It belongs to the KdsB family.

It is found in the cytoplasm. It carries out the reaction 3-deoxy-alpha-D-manno-oct-2-ulosonate + CTP = CMP-3-deoxy-beta-D-manno-octulosonate + diphosphate. The protein operates within nucleotide-sugar biosynthesis; CMP-3-deoxy-D-manno-octulosonate biosynthesis; CMP-3-deoxy-D-manno-octulosonate from 3-deoxy-D-manno-octulosonate and CTP: step 1/1. It participates in bacterial outer membrane biogenesis; lipopolysaccharide biosynthesis. Its function is as follows. Activates KDO (a required 8-carbon sugar) for incorporation into bacterial lipopolysaccharide in Gram-negative bacteria. The polypeptide is 3-deoxy-manno-octulosonate cytidylyltransferase (Ralstonia pickettii (strain 12J)).